The following is a 206-amino-acid chain: FMN-dependent NADH:quinone oxidoreductase 1 (206 aa).

FMN-binding positions include S9, 15-17 (SVS), and 139-142 (SRGG).

It belongs to the azoreductase type 1 family. Homodimer. The cofactor is FMN.

It carries out the reaction 2 a quinone + NADH + H(+) = 2 a 1,4-benzosemiquinone + NAD(+). The catalysed reaction is N,N-dimethyl-1,4-phenylenediamine + anthranilate + 2 NAD(+) = 2-(4-dimethylaminophenyl)diazenylbenzoate + 2 NADH + 2 H(+). Quinone reductase that provides resistance to thiol-specific stress caused by electrophilic quinones. Its function is as follows. Also exhibits azoreductase activity. Catalyzes the reductive cleavage of the azo bond in aromatic azo compounds to the corresponding amines. The polypeptide is FMN-dependent NADH:quinone oxidoreductase 1 (Cupriavidus pinatubonensis (strain JMP 134 / LMG 1197) (Cupriavidus necator (strain JMP 134))).